Here is a 360-residue protein sequence, read N- to C-terminus: Threonine synthase (360 aa).

Lysine 69 is subject to N6-(pyridoxal phosphate)lysine. Pyridoxal 5'-phosphate-binding positions include asparagine 95, 196–200, and threonine 326; that span reads GNAGN.

It belongs to the threonine synthase family. As to quaternary structure, homodimer. Requires pyridoxal 5'-phosphate as cofactor.

The enzyme catalyses O-phospho-L-homoserine + H2O = L-threonine + phosphate. The protein operates within amino-acid biosynthesis; L-threonine biosynthesis; L-threonine from L-aspartate: step 5/5. In terms of biological role, catalyzes the gamma-elimination of phosphate from L-phosphohomoserine and the beta-addition of water to produce L-threonine. In Mycobacterium leprae (strain TN), this protein is Threonine synthase (thrC).